An 81-amino-acid chain; its full sequence is Large ribosomal subunit protein bL27 (81 aa).

The interval 1–22 (MAHKTGQSSSSNGRESKSKRLG) is disordered.

It belongs to the bacterial ribosomal protein bL27 family.

This is Large ribosomal subunit protein bL27 from Opitutus terrae (strain DSM 11246 / JCM 15787 / PB90-1).